Reading from the N-terminus, the 269-residue chain is Intermembrane phospholipid transport system ATP-binding protein MlaF (269 aa).

One can recognise an ABC transporter domain in the interval 9 to 245 (VDMRDVSFTR…PDPRVRQFLD (237 aa)). Position 41–48 (41–48 (GPSGIGKT)) interacts with ATP.

This sequence belongs to the ABC transporter superfamily. MlaF family. As to quaternary structure, the complex is composed of two ATP-binding proteins (MlaF), two transmembrane proteins (MlaE), two cytoplasmic solute-binding proteins (MlaB) and six periplasmic solute-binding proteins (MlaD).

Its subcellular location is the cell inner membrane. Part of the ABC transporter complex MlaFEDB, which is involved in a phospholipid transport pathway that maintains lipid asymmetry in the outer membrane by retrograde trafficking of phospholipids from the outer membrane to the inner membrane. Responsible for energy coupling to the transport system. In Escherichia coli O157:H7, this protein is Intermembrane phospholipid transport system ATP-binding protein MlaF.